Consider the following 423-residue polypeptide: CinA-like protein (423 aa).

The protein belongs to the CinA family.

This chain is CinA-like protein, found in Chlorobium chlorochromatii (strain CaD3).